A 244-amino-acid polypeptide reads, in one-letter code: RNA transcription, translation and transport factor protein (244 aa).

Residues Lys20, Lys62, and Lys98 each carry the N6-acetyllysine modification.

This sequence belongs to the RTRAF family. As to quaternary structure, homodimer. Interacts with FAM98A (via N- and C-terminus). Interacts with NIN; which may prevent phosphorylation of NIN. Interacts with POLR2A. Component of a tRNA-splicing ligase complex.

Its subcellular location is the nucleus. The protein resides in the cytoplasm. It localises to the cytosol. The protein localises to the perinuclear region. It is found in the cytoskeleton. Its subcellular location is the microtubule organizing center. The protein resides in the centrosome. In terms of biological role, RNA-binding protein involved in modulation of mRNA transcription by Polymerase II. Component of the tRNA-splicing ligase complex and is required for tRNA ligation. May be required for RNA transport. The protein is RNA transcription, translation and transport factor protein of Mus musculus (Mouse).